The following is a 172-amino-acid chain: Large ribosomal subunit protein uL10 (172 aa).

The protein belongs to the universal ribosomal protein uL10 family. As to quaternary structure, part of the ribosomal stalk of the 50S ribosomal subunit. The N-terminus interacts with L11 and the large rRNA to form the base of the stalk. The C-terminus forms an elongated spine to which L12 dimers bind in a sequential fashion forming a multimeric L10(L12)X complex.

Functionally, forms part of the ribosomal stalk, playing a central role in the interaction of the ribosome with GTP-bound translation factors. The protein is Large ribosomal subunit protein uL10 of Rhizobium johnstonii (strain DSM 114642 / LMG 32736 / 3841) (Rhizobium leguminosarum bv. viciae).